Consider the following 384-residue polypeptide: 8-amino-7-oxononanoate synthase (384 aa).

Residue R23 participates in substrate binding. Residue 110 to 111 (GF) coordinates pyridoxal 5'-phosphate. H135 contributes to the substrate binding site. Residues S179, H206, and T232 each coordinate pyridoxal 5'-phosphate. K235 is subject to N6-(pyridoxal phosphate)lysine. T348 is a substrate binding site.

This sequence belongs to the class-II pyridoxal-phosphate-dependent aminotransferase family. BioF subfamily. Homodimer. Pyridoxal 5'-phosphate serves as cofactor.

It catalyses the reaction 6-carboxyhexanoyl-[ACP] + L-alanine + H(+) = (8S)-8-amino-7-oxononanoate + holo-[ACP] + CO2. It participates in cofactor biosynthesis; biotin biosynthesis. Its function is as follows. Catalyzes the decarboxylative condensation of pimeloyl-[acyl-carrier protein] and L-alanine to produce 8-amino-7-oxononanoate (AON), [acyl-carrier protein], and carbon dioxide. The sequence is that of 8-amino-7-oxononanoate synthase from Vibrio cholerae serotype O1 (strain ATCC 39315 / El Tor Inaba N16961).